A 1503-amino-acid polypeptide reads, in one-letter code: DNA-directed RNA polymerase subunit beta' (1503 aa).

Zn(2+) contacts are provided by C60, C62, C75, and C78. Positions 626, 628, and 630 each coordinate Mg(2+). Zn(2+)-binding residues include C1002, C1075, C1082, and C1085. A disordered region spans residues 1439–1503; it reads EESQQAEEAP…EEEDNDLPAF (65 aa). Acidic residues predominate over residues 1486–1503; the sequence is GDNDQSDAEEEDNDLPAF.

Belongs to the RNA polymerase beta' chain family. In terms of assembly, the RNAP catalytic core consists of 2 alpha, 1 beta, 1 beta' and 1 omega subunit. When a sigma factor is associated with the core the holoenzyme is formed, which can initiate transcription. It depends on Mg(2+) as a cofactor. The cofactor is Zn(2+).

It carries out the reaction RNA(n) + a ribonucleoside 5'-triphosphate = RNA(n+1) + diphosphate. Functionally, DNA-dependent RNA polymerase catalyzes the transcription of DNA into RNA using the four ribonucleoside triphosphates as substrates. The polypeptide is DNA-directed RNA polymerase subunit beta' (Chloroflexus aurantiacus (strain ATCC 29364 / DSM 637 / Y-400-fl)).